The chain runs to 138 residues: Putative pre-16S rRNA nuclease (138 aa).

The protein belongs to the YqgF nuclease family.

The protein resides in the cytoplasm. Its function is as follows. Could be a nuclease involved in processing of the 5'-end of pre-16S rRNA. The chain is Putative pre-16S rRNA nuclease from Clostridium tetani (strain Massachusetts / E88).